A 318-amino-acid chain; its full sequence is Acetyl-coenzyme A carboxylase carboxyl transferase subunit alpha (318 aa).

One can recognise a CoA carboxyltransferase C-terminal domain in the interval 32–293 (DLSQEIESLE…KKALQKHLGE (262 aa)).

This sequence belongs to the AccA family. Acetyl-CoA carboxylase is a heterohexamer composed of biotin carboxyl carrier protein (AccB), biotin carboxylase (AccC) and two subunits each of ACCase subunit alpha (AccA) and ACCase subunit beta (AccD).

It localises to the cytoplasm. It catalyses the reaction N(6)-carboxybiotinyl-L-lysyl-[protein] + acetyl-CoA = N(6)-biotinyl-L-lysyl-[protein] + malonyl-CoA. Its pathway is lipid metabolism; malonyl-CoA biosynthesis; malonyl-CoA from acetyl-CoA: step 1/1. Component of the acetyl coenzyme A carboxylase (ACC) complex. First, biotin carboxylase catalyzes the carboxylation of biotin on its carrier protein (BCCP) and then the CO(2) group is transferred by the carboxyltransferase to acetyl-CoA to form malonyl-CoA. The sequence is that of Acetyl-coenzyme A carboxylase carboxyl transferase subunit alpha from Syntrophomonas wolfei subsp. wolfei (strain DSM 2245B / Goettingen).